Consider the following 444-residue polypeptide: MDPLNLSWYDDDLERQNWSRPFNGSEGKPDRPHYNYYAMLLTLLIFIIVFGNVLVCMAVSREKALQTTTNYLIVSLAVADLLVATLVMPWVVYLEVVGEWKFSRIHCDIFVTLDVMMCTASILNLCAISIDRYTAVAMPMLYNTRYSSKRRVTVMIAIVWVLSFTISCPLLFGLNNTDQNECIIANPAFVVYSSIVSFYVPFIVTLLVYIKIYIVLRKRRKRVNTKRSSRAFRANLKTPLKGNCTHPEDMKLCTVIMKSNGSFPVNRRRMDAARRAQELEMEMLSSTSPPERTRYSPIPPSHHQLTLPDPSHHGLHSNPDSPAKPEKNGHAKIVNPRIAKFFEIQTMPNGKTRTSLKTMSRRKLSQQKEKKATQMLAIVLGVFIICWLPFFITHILNIHCDCNIPPVLYSAFTWLGYVNSAVNPIIYTTFNIEFRKAFMKILHC.

Residues Met1–Tyr37 are Extracellular-facing. N-linked (GlcNAc...) asparagine glycans are attached at residues Asn5, Asn17, and Asn23. Residues Ala38 to Ser60 traverse the membrane as a helical segment. Over Arg61–Asn70 the chain is Cytoplasmic. A helical membrane pass occupies residues Tyr71–Tyr93. The Extracellular portion of the chain corresponds to Leu94–Asp108. An intrachain disulfide couples Cys107 to Cys182. The chain crosses the membrane as a helical span at residues Ile109–Ile130. At Asp131 to Arg151 the chain is on the cytoplasmic side. The helical transmembrane segment at Val152–Phe172 threads the bilayer. Topologically, residues Gly173 to Ala188 are extracellular. The helical transmembrane segment at Phe189–Tyr213 threads the bilayer. The segment at Lys211–Gln374 is interaction with PPP1R9B. Residues Ile214–Gln374 are Cytoplasmic-facing. The interval Glu282–Gly329 is disordered. Residues Met375 to Leu396 form a helical membrane-spanning segment. At Asn397 to Ser410 the chain is on the extracellular side. An intrachain disulfide couples Cys400 to Cys402. Residues Ala411–Ile432 form a helical membrane-spanning segment. Residues Glu433–Cys444 lie on the Cytoplasmic side of the membrane. Cys444 is lipidated: S-palmitoyl cysteine.

This sequence belongs to the G-protein coupled receptor 1 family. Forms homo- and heterooligomers with DRD4. The interaction with DRD4 may modulate agonist-induced downstream signaling. Interacts with CADPS and CADPS2. Interacts with GPRASP1, PPP1R9B and CLIC6. Interacts with ARRB2. Interacts with HTR2A. Interacts with DRD1. As to quaternary structure, interacts with KCNA2. Post-translationally, palmitoylated. Palmitoylation which is required for proper localization to the plasma membrane and stability of the receptor could be carried on by ZDHHC4, ZDHHC3 and ZDHHC8. As to expression, expressed in retinal hyaloid vessels at postnatal day 6. Expressed in the pituitary gland, stratum, brain stem and cortex. In terms of tissue distribution, expressed in the brain stem.

The protein resides in the cell membrane. It localises to the golgi apparatus membrane. Functionally, dopamine receptor whose activity is mediated by G proteins which inhibit adenylyl cyclase. Positively regulates postnatal regression of retinal hyaloid vessels via suppression of VEGFR2/KDR activity, downstream of OPN5. The chain is D(2) dopamine receptor (Drd2) from Mus musculus (Mouse).